Consider the following 343-residue polypeptide: D-beta-hydroxybutyrate dehydrogenase, mitochondrial (343 aa).

The N-terminal 46 residues, 1–46 (MLAARLSRPLSQLPGKALSVRDRENGTRHTLLFYPASFSPDTRRTY), are a transit peptide targeting the mitochondrion. 60-84 (ITGCDSGFGFSLAKHLHSKGFLVFA) is an NAD(+) binding site. Lysine 73 and lysine 97 each carry N6-acetyllysine. Lysine 103 carries the post-translational modification N6-acetyllysine; alternate. Lysine 103 is subject to N6-succinyllysine; alternate. N6-acetyllysine is present on residues lysine 132 and lysine 177. Residue methionine 196 participates in substrate binding. Cysteine 209 acts as the Proton acceptor in catalysis. Lysine 212 bears the N6-acetyllysine mark. Serine 219 carries O-linked (GlcNAc) serine glycosylation. Serine 246 is subject to Phosphoserine. At lysine 258 the chain carries N6-acetyllysine. Lysine 259 is subject to N6-acetyllysine; alternate. Position 259 is an N6-succinyllysine; alternate (lysine 259). N6-acetyllysine is present on lysine 280.

It belongs to the short-chain dehydrogenases/reductases (SDR) family. In terms of assembly, homotetramer. In terms of processing, acetylation of Lys-132 is observed in liver mitochondria from fasted mice but not from fed mice.

It localises to the mitochondrion inner membrane. The protein resides in the mitochondrion matrix. It catalyses the reaction (R)-3-hydroxybutanoate + NAD(+) = acetoacetate + NADH + H(+). Requires phosphatidylcholine as an allosteric activator for enzymatic activity. The chain is D-beta-hydroxybutyrate dehydrogenase, mitochondrial from Mus musculus (Mouse).